The sequence spans 99 residues: Cell division protein FtsB (99 aa).

Residues 1–3 lie on the Cytoplasmic side of the membrane; sequence MKF. A helical transmembrane segment spans residues 4 to 21; it reads FVITLIVLLGLLQYRLWS. Residues 22 to 99 are Periplasmic-facing; the sequence is GDNSLPEYFV…GDRAVSSPSQ (78 aa). A coiled-coil region spans residues 31-73; sequence VLQKQIAAQQDGNAKLNERNQVLKEEIIDLKSGTEAIEERARN.

The protein belongs to the FtsB family. Part of a complex composed of FtsB, FtsL and FtsQ.

Its subcellular location is the cell inner membrane. Its function is as follows. Essential cell division protein. May link together the upstream cell division proteins, which are predominantly cytoplasmic, with the downstream cell division proteins, which are predominantly periplasmic. This Shewanella oneidensis (strain ATCC 700550 / JCM 31522 / CIP 106686 / LMG 19005 / NCIMB 14063 / MR-1) protein is Cell division protein FtsB.